The chain runs to 147 residues: MKNKMQLQFTARSRNESFARVRVAAFVAQLDPTLDELTGNQTVVSEAVTNAIIHGYEENPDGMVYVSAAICDDGTVEITVRDEGKGIADIEEARQPSFTTKPELERAGMGFTIMENFMDDVEIQSQQESGTIIRLKKHLALKNALCN.

It belongs to the anti-sigma-factor family.

It carries out the reaction L-seryl-[protein] + ATP = O-phospho-L-seryl-[protein] + ADP + H(+). The catalysed reaction is L-threonyl-[protein] + ATP = O-phospho-L-threonyl-[protein] + ADP + H(+). Binds to sigma F and blocks its ability to form an RNA polymerase holoenzyme (E-sigma F). Phosphorylates SpoIIAA on a serine residue. This phosphorylation may enable SpoIIAA to act as an anti-anti-sigma factor that counteracts SpoIIAB and thus releases sigma F from inhibition. This chain is Anti-sigma F factor, found in Heyndrickxia coagulans (Weizmannia coagulans).